A 250-amino-acid chain; its full sequence is Small ribosomal subunit protein uS2 (250 aa).

The interval 226–250 is disordered; sequence DQQNRQELGEDLGAAVEPAAEEALA. The segment covering 239–250 has biased composition (low complexity); sequence AAVEPAAEEALA.

Belongs to the universal ribosomal protein uS2 family.

This Zymomonas mobilis subsp. mobilis (strain ATCC 31821 / ZM4 / CP4) protein is Small ribosomal subunit protein uS2 (rpsB).